Consider the following 468-residue polypeptide: Ubiquinone biosynthesis monooxygenase COQ6, mitochondrial (468 aa).

Residues 1-28 (MAARLVSRCGAVRAAPHSGPLVSWRRWS) constitute a mitochondrion transit peptide.

Belongs to the UbiH/COQ6 family. Component of a multi-subunit COQ enzyme complex, composed of at least COQ3, COQ4, COQ5, COQ6, COQ7 and COQ9. Interacts with COQ8B and COQ7. FAD is required as a cofactor. Widely expressed.

It localises to the mitochondrion inner membrane. The protein localises to the golgi apparatus. The protein resides in the cell projection. The catalysed reaction is 4-hydroxy-3-(all-trans-decaprenyl)benzoate + 2 reduced [2Fe-2S]-[ferredoxin] + O2 + 2 H(+) = 3,4-dihydroxy-5-(all-trans-decaprenyl)benzoate + 2 oxidized [2Fe-2S]-[ferredoxin] + H2O. It catalyses the reaction 2-methoxy-6-(all-trans-decaprenyl)phenol + 2 reduced [2Fe-2S]-[ferredoxin] + O2 + 2 H(+) = 2-methoxy-6-(all-trans-decaprenyl)benzene-1,4-diol + 2 oxidized [2Fe-2S]-[ferredoxin] + H2O. It participates in cofactor biosynthesis; ubiquinone biosynthesis. FAD-dependent monooxygenase required for two non-consecutive steps during ubiquinone biosynthesis. Required for the C5-ring hydroxylation during ubiquinone biosynthesis by catalyzing the hydroxylation of 4-hydroxy-3-(all-trans-decaprenyl)benzoic acid to 3,4-dihydroxy-5-(all-trans-decaprenyl)benzoic acid. Also acts downstream of COQ4, for the C1-hydroxylation during ubiquinone biosynthesis by catalyzing the hydroxylation of 2-methoxy-6-(all-trans-decaprenyl)phenol to 2-methoxy-6-(all-trans-decaprenyl)benzene-1,4-diol. The electrons required for the hydroxylation reaction are funneled indirectly to COQ6 from NADPH via a ferredoxin/ferredoxin reductase system composed of FDX2 and FDXR. The protein is Ubiquinone biosynthesis monooxygenase COQ6, mitochondrial of Homo sapiens (Human).